The chain runs to 559 residues: Malate synthase, glyoxysomal (559 aa).

Residue arginine 173 is the Proton acceptor of the active site. Aspartate 459 functions as the Proton donor in the catalytic mechanism. Residues 557 to 559 (CKL) carry the Microbody targeting signal motif.

The protein belongs to the malate synthase family.

It localises to the glyoxysome. The enzyme catalyses glyoxylate + acetyl-CoA + H2O = (S)-malate + CoA + H(+). It participates in carbohydrate metabolism; glyoxylate cycle; (S)-malate from isocitrate: step 2/2. This is Malate synthase, glyoxysomal (LIP) from Zea mays (Maize).